An 845-amino-acid polypeptide reads, in one-letter code: Protein P (845 aa).

The segment at 1-179 (MPLSYQHFRK…FCGSPYSWEQ (179 aa)) is terminal protein domain (TP). The spacer stretch occupies residues 180-348 (ELHHGRLVIK…YCLSHLVNLL (169 aa)). Positions 349 to 692 (EDWGPCTEHG…YMNLYPVARQ (344 aa)) are polymerase/reverse transcriptase domain (RT). The Reverse transcriptase domain maps to 359–602 (EHHIRIPRTP…YSLNFMGYVI (244 aa)). The Mg(2+) site is built by aspartate 431, aspartate 553, and aspartate 554.

Belongs to the hepadnaviridae P protein family.

The enzyme catalyses DNA(n) + a 2'-deoxyribonucleoside 5'-triphosphate = DNA(n+1) + diphosphate. It carries out the reaction Endonucleolytic cleavage to 5'-phosphomonoester.. Its activity is regulated as follows. Activated by host HSP70 and HSP40 in vitro to be able to bind the epsilon loop of the pgRNA. Because deletion of the RNase H region renders the protein partly chaperone-independent, the chaperones may be needed indirectly to relieve occlusion of the RNA-binding site by this domain. Inhibited by several reverse-transcriptase inhibitors: Lamivudine, Adefovir and Entecavir. Its function is as follows. Multifunctional enzyme that converts the viral RNA genome into dsDNA in viral cytoplasmic capsids. This enzyme displays a DNA polymerase activity that can copy either DNA or RNA templates, and a ribonuclease H (RNase H) activity that cleaves the RNA strand of RNA-DNA heteroduplexes in a partially processive 3'- to 5'-endonucleasic mode. Neo-synthesized pregenomic RNA (pgRNA) are encapsidated together with the P protein, and reverse-transcribed inside the nucleocapsid. Initiation of reverse-transcription occurs first by binding the epsilon loop on the pgRNA genome, and is initiated by protein priming, thereby the 5'-end of (-)DNA is covalently linked to P protein. Partial (+)DNA is synthesized from the (-)DNA template and generates the relaxed circular DNA (RC-DNA) genome. After budding and infection, the RC-DNA migrates in the nucleus, and is converted into a plasmid-like covalently closed circular DNA (cccDNA). The activity of P protein does not seem to be necessary for cccDNA generation, and is presumably released from (+)DNA by host nuclear DNA repair machinery. This chain is Protein P, found in Homo sapiens (Human).